A 65-amino-acid chain; its full sequence is Cytochrome b-c1 complex subunit 9, mitochondrial (65 aa).

The chain crosses the membrane as a helical span at residues 14-34 (IYVATIFGGAFAFQGFFDVAV).

This sequence belongs to the UQCR10/QCR9 family. In terms of assembly, component of the ubiquinol-cytochrome c oxidoreductase (cytochrome b-c1 complex, complex III, CIII), a multisubunit enzyme composed of 10 subunits. The complex is composed of 3 respiratory subunits cytochrome b (COB), cytochrome c1 (CYT1) and Rieske protein (RIP1), 2 core protein subunits COR1 and QCR2, and 5 low-molecular weight protein subunits QCR6, QCR7, QCR8, QCR9 and QCR10. The complex exists as an obligatory dimer and forms supercomplexes (SCs) in the inner mitochondrial membrane with a monomer or a dimer of cytochrome c oxidase (complex IV, CIV), resulting in 2 different assemblies (supercomplexes III(2)IV and III(2)IV(2)).

It is found in the membrane. The protein resides in the mitochondrion inner membrane. Component of the ubiquinol-cytochrome c oxidoreductase, a multisubunit transmembrane complex that is part of the mitochondrial electron transport chain which drives oxidative phosphorylation. The complex plays an important role in the uptake of multiple carbon sources present in different host niches. This Candida albicans (strain SC5314 / ATCC MYA-2876) (Yeast) protein is Cytochrome b-c1 complex subunit 9, mitochondrial.